A 521-amino-acid chain; its full sequence is GMP synthase [glutamine-hydrolyzing] (521 aa).

The Glutamine amidotransferase type-1 domain maps to 5–203 (KILILDFGSQ…VHEICGCGND (199 aa)). Cys-82 acts as the Nucleophile in catalysis. Catalysis depends on residues His-177 and Glu-179. The GMPS ATP-PPase domain maps to 204–396 (WNMPDYISEA…LGLPHDMVYR (193 aa)). 231 to 237 (SGGVDSS) contributes to the ATP binding site.

As to quaternary structure, homodimer.

It carries out the reaction XMP + L-glutamine + ATP + H2O = GMP + L-glutamate + AMP + diphosphate + 2 H(+). It participates in purine metabolism; GMP biosynthesis; GMP from XMP (L-Gln route): step 1/1. In terms of biological role, catalyzes the synthesis of GMP from XMP. This chain is GMP synthase [glutamine-hydrolyzing], found in Azoarcus sp. (strain BH72).